The primary structure comprises 518 residues: Metalloprotease TIKI2 (518 aa).

The first 22 residues, 1-22 (MNCQSGLRWLVTLCAFFQVGSA), serve as a signal peptide directing secretion. Residues 23 to 499 (RDTHESTRQC…SALDSAAPNP (477 aa)) lie on the Extracellular side of the membrane. Residues Asn224, Asn233, Asn282, Asn325, and Asn340 are each glycosylated (N-linked (GlcNAc...) asparagine). The helical transmembrane segment at 500 to 517 (TYALTCFLACLISQLLFA) threads the bilayer. A topological domain (cytoplasmic) is located at residue Ser518.

This sequence belongs to the TIKI family. Mn(2+) serves as cofactor. The cofactor is Co(2+).

The protein localises to the cell membrane. Functionally, metalloprotease that acts as a negative regulator of the Wnt signaling pathway by mediating the cleavage of the N-terminal residues of a subset of Wnt proteins. Following cleavage, Wnt proteins become oxidized and form large disulfide-bond oligomers, leading to their inactivation. The sequence is that of Metalloprotease TIKI2 (trabd2b) from Danio rerio (Zebrafish).